The following is a 506-amino-acid chain: Kynurenine 3-monooxygenase (506 aa).

The tract at residues 153 to 174 is disordered; it reads QETSLLPGEESEKDKKQNTEDE. The span at 162-171 shows a compositional bias: basic and acidic residues; the sequence is ESEKDKKQNT.

Belongs to the aromatic-ring hydroxylase family. KMO subfamily. It depends on FAD as a cofactor.

The protein resides in the mitochondrion outer membrane. The catalysed reaction is L-kynurenine + NADPH + O2 + H(+) = 3-hydroxy-L-kynurenine + NADP(+) + H2O. The protein operates within cofactor biosynthesis; NAD(+) biosynthesis; quinolinate from L-kynurenine: step 1/3. In terms of biological role, catalyzes the hydroxylation of L-kynurenine (L-Kyn) to form 3-hydroxy-L-kynurenine (L-3OHKyn). Required for synthesis of quinolinic acid. This Cryptococcus neoformans var. neoformans serotype D (strain JEC21 / ATCC MYA-565) (Filobasidiella neoformans) protein is Kynurenine 3-monooxygenase.